The chain runs to 298 residues: Nitrogenase iron protein (298 aa).

13 to 20 (GKGGIGKS) contributes to the ATP binding site. A [4Fe-4S] cluster-binding site is contributed by C101. Residue R104 is modified to ADP-ribosylarginine; by dinitrogenase reductase ADP-ribosyltransferase. A [4Fe-4S] cluster-binding site is contributed by C135.

The protein belongs to the NifH/BchL/ChlL family. Homodimer. Requires [4Fe-4S] cluster as cofactor. In terms of processing, the reversible ADP-ribosylation of Arg-104 inactivates the nitrogenase reductase and regulates nitrogenase activity.

It catalyses the reaction N2 + 8 reduced [2Fe-2S]-[ferredoxin] + 16 ATP + 16 H2O = H2 + 8 oxidized [2Fe-2S]-[ferredoxin] + 2 NH4(+) + 16 ADP + 16 phosphate + 6 H(+). Functionally, the key enzymatic reactions in nitrogen fixation are catalyzed by the nitrogenase complex, which has 2 components: the iron protein and the molybdenum-iron protein. The protein is Nitrogenase iron protein of Cyanothece sp. (strain PCC 7425 / ATCC 29141).